The chain runs to 328 residues: N-acetyl-gamma-glutamyl-phosphate reductase (328 aa).

C143 is an active-site residue.

The protein belongs to the NAGSA dehydrogenase family. Type 1 subfamily.

It is found in the cytoplasm. The enzyme catalyses N-acetyl-L-glutamate 5-semialdehyde + phosphate + NADP(+) = N-acetyl-L-glutamyl 5-phosphate + NADPH + H(+). It functions in the pathway amino-acid biosynthesis; L-arginine biosynthesis; N(2)-acetyl-L-ornithine from L-glutamate: step 3/4. Functionally, catalyzes the NADPH-dependent reduction of N-acetyl-5-glutamyl phosphate to yield N-acetyl-L-glutamate 5-semialdehyde. The sequence is that of N-acetyl-gamma-glutamyl-phosphate reductase from Methanosphaerula palustris (strain ATCC BAA-1556 / DSM 19958 / E1-9c).